The primary structure comprises 372 residues: Mevalonate 3,5-bisphosphate decarboxylase (372 aa).

The protein belongs to the mevalonate 3,5-bisphosphate decarboxylase family. In terms of assembly, homodimer.

It carries out the reaction (R)-3,5-bisphosphomevalonate + H(+) = isopentenyl phosphate + phosphate + CO2. The protein operates within isoprenoid biosynthesis; isopentenyl diphosphate biosynthesis via mevalonate pathway. Functionally, catalyzes the ATP-independent decarboxylation of (R)-mevalonate 3,5-bisphosphate to isopentenyl phosphate. Functions in an alternative mevalonate pathway, only present in extreme acidophiles of the Thermoplasmatales order, which passes through mevalonate 3-phosphate rather than mevalonate 5-phosphate. The protein is Mevalonate 3,5-bisphosphate decarboxylase of Thermoplasma volcanium (strain ATCC 51530 / DSM 4299 / JCM 9571 / NBRC 15438 / GSS1).